The following is a 361-amino-acid chain: Molybdenum import ATP-binding protein ModC (361 aa).

In terms of domain architecture, ABC transporter spans 1–235 (MDGLRLRFRR…VDLPLALDDD (235 aa)). An ATP-binding site is contributed by 33–40 (GHSGSGKS). Residues 296–361 (QSSILNRLPV…AQIKSVAVLA (66 aa)) form the Mop domain.

This sequence belongs to the ABC transporter superfamily. Molybdate importer (TC 3.A.1.8) family. The complex is composed of two ATP-binding proteins (ModC), two transmembrane proteins (ModB) and a solute-binding protein (ModA).

Its subcellular location is the cell inner membrane. It carries out the reaction molybdate(out) + ATP + H2O = molybdate(in) + ADP + phosphate + H(+). In terms of biological role, part of the ABC transporter complex ModABC involved in molybdenum import. Responsible for energy coupling to the transport system. In Pseudomonas aeruginosa (strain ATCC 15692 / DSM 22644 / CIP 104116 / JCM 14847 / LMG 12228 / 1C / PRS 101 / PAO1), this protein is Molybdenum import ATP-binding protein ModC.